A 104-amino-acid chain; its full sequence is Circadian clock oscillator protein KaiB (104 aa).

Belongs to the KaiB family. As to quaternary structure, the KaiABC complex composition changes during the circadian cycle to control KaiC phosphorylation. Complexes KaiC(6), KaiA(2-4):KaiC(6), KaiB(6):KaiC(6) and KaiC(6):KaiB(6):KaiA(12) are among the most important forms, many form cooperatively. Undergoes a major conformational rearrangment; in the free state forms homotetramers as a dimer of dimers. When bound to the CI domain of KaiC switches to a monomeric thioredoxin-fold (KaiB(fs)). KaiB(fs) binds CikA, leading it to dephosphorylate phospho-RpaA.

In terms of biological role, key component of the KaiABC oscillator complex, which constitutes the main circadian regulator in cyanobacteria. Complex composition changes during the circadian cycle to control KaiC phosphorylation. KaiA stimulates KaiC autophosphorylation, while KaiB sequesters KaiA, leading to KaiC autodephosphorylation. Phospho-Ser-431 KaiC accumulation triggers binding of KaiB to form the KaiB(6):KaiC(6) complex, leading to changes in output regulators CikA and SasA. KaiB switches to a thioredoxin-like fold (KaiB(fs)) when bound to KaiC. KaiB(6):KaiC(6) formation exposes a site for KaiA binding that sequesters KaiA from KaiC, making the KaiC(6):KaiB(6):KaiA(12) complex that results in KaiC autodephosphorylation. Functionally, a metamorphic protein which reversibly switches between an inactive tetrameric fold and a rare, thioredoxin-like monomeric fold (KaiB(fs)). KaiB(fs) binds phospho-KaiC, KaiA and CikA. KaiA and CikA compete for binding to KaiB(fs), and KaiB(fs) and SasA compete for binding to KaiC, thus the clock oscillator and output signal pathway are tightly coupled. The chain is Circadian clock oscillator protein KaiB from Microcystis aeruginosa (strain NIES-843 / IAM M-2473).